Reading from the N-terminus, the 552-residue chain is Threonylcarbamoyladenosine tRNA methylthiotransferase (552 aa).

Residues 31–61 (YENKKTVTVRAKKRSQIRLESQEEEEKPKPT) are disordered. An MTTase N-terminal domain is found at 71-178 (QKVFVKTWGC…VVEVVEETLK (108 aa)). Cysteine 80, cysteine 115, cysteine 144, cysteine 221, cysteine 225, and cysteine 228 together coordinate [4Fe-4S] cluster. The region spanning 207-438 (RKNPLIEIIS…DLFYSYEPYA (232 aa)) is the Radical SAM core domain. One can recognise a TRAM domain in the interval 438–500 (ADRVGEIYTV…KFSMVGEILD (63 aa)). The helical transmembrane segment at 532 to 552 (FGIALVLGSLAFLIQLVVRLL) threads the bilayer.

Belongs to the methylthiotransferase family. CDKAL1 subfamily. [4Fe-4S] cluster serves as cofactor.

It localises to the membrane. It carries out the reaction N(6)-L-threonylcarbamoyladenosine(37) in tRNA + (sulfur carrier)-SH + AH2 + 2 S-adenosyl-L-methionine = 2-methylsulfanyl-N(6)-L-threonylcarbamoyladenosine(37) in tRNA + (sulfur carrier)-H + 5'-deoxyadenosine + L-methionine + A + S-adenosyl-L-homocysteine + 2 H(+). In terms of biological role, catalyzes the methylthiolation of N6-threonylcarbamoyladenosine (t(6)A), leading to the formation of 2-methylthio-N6-threonylcarbamoyladenosine (ms(2)t(6)A) at position 37 in tRNAs that read codons beginning with adenine. The sequence is that of Threonylcarbamoyladenosine tRNA methylthiotransferase from Drosophila melanogaster (Fruit fly).